The following is a 108-amino-acid chain: Mitochondrial pyruvate carrier 3 (108 aa).

Helical transmembrane passes span 19 to 35, 51 to 67, and 74 to 90; these read IHFWAPTFKWGISIANI, IVITGTGLVWSRYSTVI, and LFSVSLGMAVTGIYQLT.

Belongs to the mitochondrial pyruvate carrier (MPC) (TC 2.A.105) family. Abundant in leaf and particularly in the guard cells.

The protein resides in the mitochondrion. It is found in the mitochondrion inner membrane. Mediates the uptake of pyruvate into mitochondria. Negatively regulates ABA-induced guard cell signaling and mediates drought stress responses. This Arabidopsis thaliana (Mouse-ear cress) protein is Mitochondrial pyruvate carrier 3.